The chain runs to 535 residues: Triacylglyceride transporter MHAS_02168/C731_2106 (535 aa).

Residues 1 to 18 (MAFPQTPNRLIRPRRTSR) lie on the Cytoplasmic side of the membrane. Residues 19–39 (GIAISAGGLAVLLGALDTYVV) form a helical membrane-spanning segment. At 40–60 (VSIVTDIMRDVGIAVNQIQRV) the chain is on the periplasmic side. The chain crosses the membrane as a helical span at residues 61–82 (TPIITGYLLGYIAAMPLLGRAS). Over 83 to 86 (DRFG) the chain is Cytoplasmic. A helical membrane pass occupies residues 87–107 (RKLLIQISLAGFALGSVITAL). Over 108-111 (ATNL) the chain is Periplasmic. A helical membrane pass occupies residues 112–136 (DVLVAGRVIQGAASGALLPVTLALA). At 137–145 (ADLWATHKR) the chain is on the cytoplasmic side. Residues 146 to 167 (AAVLGGVGAAQELGAVLGPIYG) form a helical membrane-spanning segment. The Periplasmic segment spans residues 168–177 (IFVVWLFHHW). A helical membrane pass occupies residues 178-198 (QAVFWVNVPLALIAMVLIHIS). Residues 199-212 (LPPRVRTEEPQRVD) are Cytoplasmic-facing. A helical transmembrane segment spans residues 213 to 230 (VTGGLLLALALGLATIGL). Topologically, residues 231 to 243 (YNAEPDGKQVLPE) are periplasmic. A helical transmembrane segment spans residues 244-263 (YGPPLIIGAVIAAVAFLVWE). The Cytoplasmic portion of the chain corresponds to 264–278 (RFARTRLLDPAGVRF). A helical membrane pass occupies residues 279–300 (RPFLIALLVSLVTGGALMVTLV). Topologically, residues 301 to 320 (NVELFGQGVLGLDQDEAVFL) are periplasmic. 2 helical membrane passes run 321–343 (LARF…TRVG) and 344–364 (DRAV…LIAQ). Over 365–384 (WPADVLESRHDLGFVSLPTL) the chain is Periplasmic. A beta-hairpin region spans residues 373–382 (RHDLGFVSLP). A helical membrane pass occupies residues 385–407 (DTDLAIAGFGLGLVIAPLTSAAL). The Cytoplasmic segment spans residues 408–415 (RVVPAAQH). The chain crosses the membrane as a helical span at residues 416-440 (GIASAAVVVARMIGMLIGIAALSAW). At 441-487 (GLYRFNQYLKEQLAALPPAPADFPGGQMAGQMMRLRTATVQAYVLQY) the chain is on the periplasmic side. A helical transmembrane segment spans residues 488 to 507 (GEIFAITAGLCVFGAVLGLF). The Cytoplasmic portion of the chain corresponds to 508–535 (IAGRREHAEESADAVDGVSNARDRAPSA).

The protein belongs to the major facilitator superfamily. P55 (TC 2.A.1.3.34) family.

The protein resides in the cell inner membrane. Its function is as follows. In association with lipoprotein LprG transports triacylglycerides (TAG) across the inner cell membrane, probably transfering them to lipoprotein LprG in the periplasm. TAG probably regulates lipid metabolism and growth regulation and plays a structural role in the outer membrane. Mutagenesis and molecular modeling suggests TAG (and maybe other lipids) enters the central cavity of the P55 transporter from within the cell inner membrane via clefts on the cytoplasmic face of P55 between TM5-TM8 and TM2-TM11. From there the lipid is probably transferred to the hydrophobic cavity of LprG. The lprG-MHAS_02167/C731_2107 operon complements the vancomycin sensitivity of an M.smegmatis knockout of the same operon. Probably required with LprG for normal surface localization of lipoarabinomannan (LAM). The polypeptide is Triacylglyceride transporter MHAS_02168/C731_2106 (Mycolicibacterium hassiacum (strain DSM 44199 / CIP 105218 / JCM 12690 / 3849) (Mycobacterium hassiacum)).